A 260-amino-acid polypeptide reads, in one-letter code: Triosephosphate isomerase (260 aa).

Substrate is bound at residue 11–13 (NWK). H103 (electrophile) is an active-site residue. E175 functions as the Proton acceptor in the catalytic mechanism. Residues G181, S220, and 241 to 242 (GG) contribute to the substrate site.

This sequence belongs to the triosephosphate isomerase family. In terms of assembly, homodimer.

It is found in the cytoplasm. The enzyme catalyses D-glyceraldehyde 3-phosphate = dihydroxyacetone phosphate. It functions in the pathway carbohydrate biosynthesis; gluconeogenesis. The protein operates within carbohydrate degradation; glycolysis; D-glyceraldehyde 3-phosphate from glycerone phosphate: step 1/1. Functionally, involved in the gluconeogenesis. Catalyzes stereospecifically the conversion of dihydroxyacetone phosphate (DHAP) to D-glyceraldehyde-3-phosphate (G3P). This Shewanella frigidimarina (strain NCIMB 400) protein is Triosephosphate isomerase.